The chain runs to 494 residues: Histidine--tRNA ligase (494 aa).

The tract at residues 1-20 (MAKDQKKQPRPKAETPKGFR) is disordered.

This sequence belongs to the class-II aminoacyl-tRNA synthetase family. As to quaternary structure, homodimer.

It localises to the cytoplasm. The catalysed reaction is tRNA(His) + L-histidine + ATP = L-histidyl-tRNA(His) + AMP + diphosphate + H(+). In Paracoccus denitrificans (strain Pd 1222), this protein is Histidine--tRNA ligase.